A 332-amino-acid chain; its full sequence is Methylthioribose-1-phosphate isomerase (332 aa).

Substrate contacts are provided by residues 44–46 (RGA), Arg-87, and Gln-192. The active-site Proton donor is Asp-233. Position 243–244 (243–244 (NK)) interacts with substrate.

This sequence belongs to the eIF-2B alpha/beta/delta subunits family. MtnA subfamily.

It carries out the reaction 5-(methylsulfanyl)-alpha-D-ribose 1-phosphate = 5-(methylsulfanyl)-D-ribulose 1-phosphate. It functions in the pathway amino-acid biosynthesis; L-methionine biosynthesis via salvage pathway; L-methionine from S-methyl-5-thio-alpha-D-ribose 1-phosphate: step 1/6. In terms of biological role, catalyzes the interconversion of methylthioribose-1-phosphate (MTR-1-P) into methylthioribulose-1-phosphate (MTRu-1-P). The chain is Methylthioribose-1-phosphate isomerase from Dehalococcoides mccartyi (strain ATCC BAA-2100 / JCM 16839 / KCTC 5957 / BAV1).